The chain runs to 96 residues: Small ribosomal subunit protein uS19 (96 aa).

The protein belongs to the universal ribosomal protein uS19 family.

Functionally, protein S19 forms a complex with S13 that binds strongly to the 16S ribosomal RNA. This Koribacter versatilis (strain Ellin345) protein is Small ribosomal subunit protein uS19.